The sequence spans 2494 residues: MSSSGYPPNQGAFSTEQGRYSSHPVQYTFPSSRHQQEFPVPEYRSSHLEASQLLQQQQLRRRPSLLSEFHPVSDRPQDRRQGYEQQYHSVTQNEHEALESKRPRLDVSDSHYRVGAASVVPLVPTIQEGVRVQSEVKKEQGLPSKHETTSSPLSGQPGEEQEASPSKLSKEELIQSMDRVDREIAKVEQQILKLKKKQQQLEEEAAKPPEPEKPVSPPPVEQKHRSIVQIIYDENRKKAEEAHKILEGLGPKVELPLYNQPSDTKVYHENIKTNQVMRKKLILFFKRRNHARKLREQNICQRYDQLMEAWEKKVDRIENNPRRKAKESKTREYYEKQFPEIRKQREQQERFQRVGQRGAGLSATIARSEHEISEIIDGLSEQENNEKQMRQLSVIPPMMFDAEQRRVKFINMNGLMEDPMKVYKDRQFMNVWTDHEKEIFKEKFVQHPKNFGLIASYLERKTVSDCVLYYYLTKKNENFKALVRRNYPKRRGRNQQQITRPAQEEKEIEKVEEEKAERNDKKEEERREEEEKEEKEELRDGTKDRTDAIAEDGEDKEQSTPRGRKTANSQGRRKGRITRSMASEAAAAANAASTATTAPATTTSTTATTTTAALVPVAPPPEEPTPPPTQEQSLVEHGRNWGAIAKMVGSKSESQCKNFYFNYKRRHNLDNLLQQHKQKSSRRPREERDVSQCESVASTVSAQEDEENEASNEEENAEDSEGAENSSDTESAPSPSPAEAAKLGDDAVDRTTSSVSIEAPPEQDAASKSVSDSSPTPTVENIKPPETQYTELKVKEEISTETEEAMEVEERSQGAEIKSTLSLPVQTKAEPDEVESKPSESAEVKIEEDTKDQDMERLMDRAEATDMVYAPPLHISRGRQESQSDNDSSATCSADEEVDGEPERPRIYTLDSKPSLLNPAGTILISSSMKQGPMDLQQLQHRAAVIPPMASCSPCNITTGTSNFSMYQRHLYENNLLEEQRQRQEQLSLESRMSASPGNMSKSPNMDWEGKSVYMPYTEVKRAFEHEAQMQNVARSVSPYRLSPREVSRASPQVDMNPARYCVPPVLQPAPHQVITSLSDGARLPVTRPTRPPPPLIPSSKTSATSSDKPSFITGGSISQGTPGTYLTSLSQSYSQETVKPSVGSISLGLPRQQESAKTGSVTYIKQEEFSPRGQSSQPEGLLVRAQHEGVVRGTMTAIQEGSITRGTPATKVPIEAVSTLRGSITQGTPALSQSGIAADVLLKTTITRLATEDIGSPERCRDETSAKGHVIYEGKSGHIVSYDTAIKNMREGTRSPRTAPEVTLKRTFDTMEGNIKQAMSVREAAVSGPMEGLICRTLPKGSTHAEIKDRQVLSGSIMKGTPRTTSDSFEDGLKYAKQIKLESPPIRSFEGAISKGKPYECVTTIKEMGRSIHEIPRQDLGSQESRKTPESSRQIIEGSISQGTPIKYEGTSGQSAIKHNVKSLITGPSNLSRGLPQMEVMPENLKMGERSKYEDTKSSEAIRSRHTSVVSSGPSVLRSTLHEASKSQLSPGVYEDNNARRTPVNYPSPMSRSSPMARSAEVGLTPGKSSSHERKSTLTPTQRENIVVKSPVPGVDPTAAHSPFDPHLRGAPPGDVYRTHLPPHLDPALQFHRPLDPAAAAAYLFQRQLSPTPGYPSQYQLYAMENTRQTILNDYITSQQMQVNLRPDVARGLSPRDQGLAIPYPGARGIIDLTNMPPAILVPHPGGTSTPPMDRITYIPGTQLAFPPRPYNPASMSPGHPTHLAAANSVSAERERERERDRERDREREKEQRERERDRERERERLAAAPSDHYLRPVSEQPGRPGSHGFVRSPSPSVRAQESIMQQRPSIFQGTNGKSVITPLDAAQLRIMPPTPGAASITQGIPASRYSTAADALAALVDAAASAPQMEVVKPKEMKHDPARSEESLSRRNVLEQQQQQQQIDCERRVMQSPYTSSSFSGSKSQGQPSPAVYSEAGKEKTAHTKSRYVEELRMRGKTTITAANFIDVIITQQIASDKDGRDRNSQSSDSSSSHSSHRYDAPRDTIEVISPANSPVQEKESYPPEIPKSSQTESESSRKYEGQPNRYRQQQESPSPQQTIPGHVPQTHRLITLADHICQIITQDFARNQPVNQALQQPPASTFQSTNPSSTPVRTKASSRFSPESQVQPVHNQRPASRVSPENVLDRPRGRPGKSPDRGHISEPYEPISPPQAPLLHAKQDSMLLLSQRQEPPEQRNDSRSPGNISYLPSFFTKLENTSPMVMYKKQEIFRKLNSSGGGDSEMAAAQPGTEIFNLPAVTTSGAISSRGHSFADPASNLGLEDIIRKALMGNFDDKSEDHSVLVGVAQGNPSGTQNSEARREEANPSPNSGGGTHKQKLISKYGSRKTKSPISGSQTYLGAERPSSVSSVHSEGDYRQASAWAWEDRPSSTGSTQFPYNPLTMGMLNSTPPSSMSCAPTSMTQTSAHQQSRIWEREPAPLLSEQYETLSDSDE.

A compositionally biased stretch (polar residues) spans 1-33; that stretch reads MSSSGYPPNQGAFSTEQGRYSSHPVQYTFPSSR. 4 disordered regions span residues 1 to 38, 53 to 106, 134 to 170, and 198 to 222; these read MSSSGYPPNQGAFSTEQGRYSSHPVQYTFPSSRHQQEF, LLQQ…PRLD, SEVKKEQGLPSKHETTSSPLSGQPGEEQEASPSKLSK, and QQQLEEEAAKPPEPEKPVSPPPVEQ. Residues 71-82 show a composition bias toward basic and acidic residues; it reads PVSDRPQDRRQG. Polar residues predominate over residues 83 to 92; that stretch reads YEQQYHSVTQ. Composition is skewed to basic and acidic residues over residues 93 to 106, 134 to 148, and 204 to 213; these read NEHEALESKRPRLD, SEVKKEQGLPSKHET, and EAAKPPEPEK. Positions 154–304 are interaction with tbl1xr1; sequence SGQPGEEQEA…REQNICQRYD (151 aa). Residues 168 to 208 are a coiled coil; the sequence is LSKEELIQSMDRVDREIAKVEQQILKLKKKQQQLEEEAAKP. The SANT 1 domain occupies 427–478; that stretch reads QFMNVWTDHEKEIFKEKFVQHPKNFGLIASYLERKTVSDCVLYYYLTKKNEN. 8 disordered regions span residues 488-638, 671-913, 981-1007, 1081-1124, 1413-1434, 1488-1585, 1745-1845, and 1912-1987; these read PKRR…VEHG, NLLQ…LDSK, RQRQEQLSLESRMSASPGNMSKSPNMD, GARL…GTPG, IHEIPRQDLGSQESRKTPESSR, MGER…TQRE, LAFP…QESI, and EVVK…AHTK. 2 stretches are compositionally biased toward basic and acidic residues: residues 502 to 525 and 535 to 548; these read AQEEKEIEKVEEEKAERNDKKEEE and KEELRDGTKDRTDA. Residues 502–549 are a coiled coil; the sequence is AQEEKEIEKVEEEKAERNDKKEEERREEEEKEEKEELRDGTKDRTDAI. Residues 582-616 show a composition bias toward low complexity; it reads ASEAAAAANAASTATTAPATTTSTTATTTTAALVP. The segment covering 617–629 has biased composition (pro residues); it reads VAPPPEEPTPPPT. In terms of domain architecture, SANT 2 spans 622 to 668; that stretch reads EEPTPPPTQEQSLVEHGRNWGAIAKMVGSKSESQCKNFYFNYKRRHN. Positions 692–702 are enriched in polar residues; it reads QCESVASTVSA. Residues 698–726 are a coiled coil; sequence STVSAQEDEENEASNEEENAEDSEGAENS. Residues 703–722 are compositionally biased toward acidic residues; that stretch reads QEDEENEASNEEENAEDSEG. The segment covering 723-741 has biased composition (low complexity); sequence AENSSDTESAPSPSPAEAA. The span at 766–779 shows a compositional bias: polar residues; it reads ASKSVSDSSPTPTV. Over residues 829–864 the composition is skewed to basic and acidic residues; that stretch reads AEPDEVESKPSESAEVKIEEDTKDQDMERLMDRAEA. Composition is skewed to polar residues over residues 881–892, 993–1004, and 1104–1124; these read ESQSDNDSSATC, MSASPGNMSKSP, and ATSSDKPSFITGGSISQGTPG. The segment covering 1488–1504 has biased composition (basic and acidic residues); sequence MGERSKYEDTKSSEAIR. The span at 1508–1519 shows a compositional bias: polar residues; that stretch reads TSVVSSGPSVLR. The span at 1548–1561 shows a compositional bias: low complexity; it reads PSPMSRSSPMARSA. The stretch at 1771 to 1810 forms a coiled coil; sequence VSAERERERERDRERDREREKEQRERERDRERERERLAAA. Residues 1773 to 1807 are compositionally biased toward basic and acidic residues; sequence AERERERERDRERDREREKEQRERERDRERERERL. Residues 1835 to 1845 are compositionally biased toward polar residues; the sequence is PSPSVRAQESI. Residues 1914 to 1935 show a composition bias toward basic and acidic residues; the sequence is VKPKEMKHDPARSEESLSRRNV. Positions 1953-1972 are enriched in low complexity; that stretch reads QSPYTSSSFSGSKSQGQPSP. Positions 1978–1987 are enriched in basic and acidic residues; the sequence is AGKEKTAHTK. The short motif at 2008–2012 is the CORNR box 1 element; it reads IDVII. Positions 2018-2105 are disordered; the sequence is SDKDGRDRNS…PSPQQTIPGH (88 aa). Residues 2027–2036 show a composition bias toward low complexity; the sequence is SQSSDSSSSH. Positions 2039 to 2048 are enriched in basic and acidic residues; it reads HRYDAPRDTI. The span at 2088-2102 shows a compositional bias: polar residues; that stretch reads RYRQQQESPSPQQTI. A CORNR box 2 motif is present at residues 2119–2123; it reads ICQII. The segment covering 2135 to 2177 has biased composition (polar residues); sequence QALQQPPASTFQSTNPSSTPVRTKASSRFSPESQVQPVHNQRP. A disordered region spans residues 2135 to 2216; sequence QALQQPPAST…YEPISPPQAP (82 aa). The span at 2186–2205 shows a compositional bias: basic and acidic residues; sequence VLDRPRGRPGKSPDRGHISE. A CORNR box 3 motif is present at residues 2322-2326; the sequence is LEDII. Disordered stretches follow at residues 2346-2413 and 2446-2494; these read GVAQ…SVHS and MLNS…DSDE. The span at 2376–2390 shows a compositional bias: basic residues; sequence HKQKLISKYGSRKTK. 2 stretches are compositionally biased toward polar residues: residues 2446-2472 and 2485-2494; these read MLNSTPPSSMSCAPTSMTQTSAHQQSR and QYETLSDSDE.

The protein belongs to the N-CoR nuclear receptor corepressors family. As to quaternary structure, forms a large corepressor complex that contains sin3a/b, histone deacetylases hdac1 and hdac2, rbbp4 and possibly rbbp7. Interacts with the thyroid receptor (TR, composed of rxra and thrb) and the retinoid acid receptor (RAR, composed of rxra and rara) in the absence of ligand. Interacts with tbl1xr1. Interacts with zbtb33/kaiso.

The protein localises to the nucleus. Mediates transcriptional repression by certain nuclear receptors. Participates in complexes which promote histone deacetylation and the formation of repressive chromatin structures which may impede access by the basal transcription machinery. In association with hdac3, may play a role in the regulation of the circadian clock. The sequence is that of Nuclear receptor corepressor 1 (ncor1) from Xenopus tropicalis (Western clawed frog).